A 539-amino-acid polypeptide reads, in one-letter code: MKMASNDANPSDGSAANLVPEVNNEVMALEPVVGAAIAAPVAGQQNVIDPWIRNNFVQAPGGEFTVSPRNAPGEILWSAPLGPDLNPYLSHLSRMYNGYAGGFEVQVILAGNAFTAGKVIFAAVPPNFPTEGLSPSQVTMFPHIIVDVRQLEPVLIPLPDVRNNFYHYNQANDSTLKLIAMLYTPLRANNAGDDVFTVSCRVLTRPSPDFDFIFLVPPTVESRTKPFTVPVLTVEEMSNSRFPIPLEKLYTGPSSAFVVQPQNGRCTTDGVLLGTTQLSAVNICNFRGDVTHIAGSHDYTMNLASQNWSNYDPTEEIPAPLGTPDFVGKIQGLLTQTTRADGSTRAHKATVSTGSVHFTPKLGSVQFTTDTNNDFQAGQNTKFTPVGVIQDGDHHQNEPQQWSLPNYSGRTGHNVHLAPAVAPTFPGEQLLFFRSTMPGCSGYPNMNLDCLLPQEWVLHFYQEAAPAQSDVALLRFVNPDTGRVLFECKLHKSGYITVAHTGPYDLVLPPNGYFRFDSWVNQFYTLAPMGNGTGRRRAL.

The interval 1-221 (MKMASNDANP…FIFLVPPTVE (221 aa)) is shell domain. The interval 222–274 (SRTKPFTVPVLTVEEMSNSRFPIPLEKLYTGPSSAFVVQPQNGRCTTDGVLLG) is P1 sub-domain 1. The tract at residues 222–539 (SRTKPFTVPV…GNGTGRRRAL (318 aa)) is protruding domain. The interval 275–417 (TTQLSAVNIC…SGRTGHNVHL (143 aa)) is P2 sub-domain. The interval 418–539 (APAVAPTFPG…GNGTGRRRAL (122 aa)) is P1 sub-domain 2.

Belongs to the caliciviridae capsid protein family. In terms of assembly, homodimer. Homomultimer. Interacts with the minor capsid protein VP2. Interacts (via C-terminus) with host type I histo-blood group structures antigens at the surface of target cells. May be cleaved by host protease to generate soluble capsid protein. Assembled capsid cannot be cleaved.

The protein localises to the virion. Its subcellular location is the host cytoplasm. Capsid protein self assembles to form an icosahedral capsid with a T=3 symmetry, about 38 nm in diameter, and consisting of 180 capsid proteins. A smaller form of capsid with a diameter of 23 nm might be capsid proteins assembled as icosahedron with T=1 symmetry. The capsid encapsulates the genomic RNA and is decorated with VP2 proteins. Attaches virion to target cells by binding histo-blood group antigens (HBGAs) present on gastroduodenal epithelial cells. Functionally, the soluble capsid protein may play a role in viral immunoevasion. The chain is Capsid protein VP1 from Homo sapiens (Human).